The chain runs to 460 residues: uncharacterized protein (460 aa).

A TRAM domain is found at 9–67; the sequence is NFKKNDIFEAEVLDLTHEGQGVVKIDSFPFFVDNALPGERIKMHVLKVGKSFGFGRVDE. Q292, Y321, E342, and D390 together coordinate S-adenosyl-L-methionine. Residue C417 is the Nucleophile of the active site.

The protein belongs to the class I-like SAM-binding methyltransferase superfamily. RNA M5U methyltransferase family.

This is an uncharacterized protein from Lactococcus lactis subsp. lactis (strain IL1403) (Streptococcus lactis).